A 140-amino-acid chain; its full sequence is Putative nickel-responsive regulator (140 aa).

Residues His-76, His-87, His-89, and Cys-95 each coordinate Ni(2+).

Belongs to the transcriptional regulatory CopG/NikR family. Ni(2+) serves as cofactor.

Transcriptional regulator. This is Putative nickel-responsive regulator from Rhodopseudomonas palustris (strain BisB5).